The primary structure comprises 235 residues: Centromere protein H (235 aa).

The interval 1 to 23 is disordered; that stretch reads MAGRLSESVGSGPGAEAETAADP. Positions 125–145 form a coiled coil; it reads EIIQAHQQARVIRENLNDIRR.

This sequence belongs to the CENP-H/MCM16 family. Component of the CENPA-HI complex, at least composed of CENPH, CENPI, CENPK, CENPL, CENPM, CENPO and CENPP. Interacts with NDC80.

It is found in the nucleus. The protein resides in the chromosome. Its subcellular location is the centromere. The protein localises to the kinetochore. In terms of biological role, component of the CENPA-HI complex, a centromeric complex involved in assembly of kinetochore proteins, mitotic progression and chromosome segregation. Required for the localization of CENPC but not CENPA to the centromere. It however may be involved in incorporation of newly synthesized CENPA into centromeres via its interaction with the CENPA-NAC complex. The polypeptide is Centromere protein H (CENPH) (Gallus gallus (Chicken)).